We begin with the raw amino-acid sequence, 276 residues long: Pyrroline-5-carboxylate reductase (276 aa).

The protein belongs to the pyrroline-5-carboxylate reductase family.

The protein resides in the cytoplasm. It catalyses the reaction L-proline + NADP(+) = (S)-1-pyrroline-5-carboxylate + NADPH + 2 H(+). The enzyme catalyses L-proline + NAD(+) = (S)-1-pyrroline-5-carboxylate + NADH + 2 H(+). The protein operates within amino-acid biosynthesis; L-proline biosynthesis; L-proline from L-glutamate 5-semialdehyde: step 1/1. This Arabidopsis thaliana (Mouse-ear cress) protein is Pyrroline-5-carboxylate reductase (PROC1).